The chain runs to 201 residues: Small ribosomal subunit protein uS2 (201 aa).

Belongs to the universal ribosomal protein uS2 family. As to quaternary structure, part of the 50S ribosomal subunit.

The protein is Small ribosomal subunit protein uS2 of Thermococcus kodakarensis (strain ATCC BAA-918 / JCM 12380 / KOD1) (Pyrococcus kodakaraensis (strain KOD1)).